The sequence spans 402 residues: CD2 homolog (402 aa).

Positions 1–16 (MIIIVIFLMCLKIVLN) are cleaved as a signal peptide. Residues 17-204 (NIIIWSTLNQ…ILKYQNYLST (188 aa)) lie on the Extracellular side of the membrane. N-linked (GlcNAc...) asparagine; by host glycans are attached at residues Asn25, Asn37, Asn52, Asn55, Asn72, Asn77, Asn81, Asn89, Asn95, Asn108, Asn125, Asn137, Asn148, Asn153, Asn169, Asn177, Asn184, and Asn190. Disulfide bonds link Cys126–Cys191 and Cys133–Cys174. A helical transmembrane segment spans residues 205–225 (LFYIIIFIVSGLIIGIFISII). Topologically, residues 226-402 (SVLSIRRKRK…ISLIHVDRII (177 aa)) are cytoplasmic. A disordered region spans residues 238 to 276 (VEEIESPPPSESNEEDISHDDTTSIHEPSPREPLLPKPY). The segment covering 256 to 267 (HDDTTSIHEPSP) has biased composition (basic and acidic residues). 11 consecutive repeat copies span residues 302–307 (KPCPPP), 308–313 (KPCPPP), 314–319 (KPCPPP), 320–325 (KPCPPP), 326–331 (KPCSPP), 332–337 (KPCRPP), 338–343 (KPCPPP), 344–349 (KPCPPP), 350–355 (KPCPPP), 356–361 (KPCPPS), and 362–367 (KPCPSP). The 11 X 6 AA tandem repeats of K-P-C-[PRS]-[P]-[PS] stretch occupies residues 302–367 (KPCPPPKPCP…CPPSKPCPSP (66 aa)). A compositionally biased stretch (pro residues) spans 319 to 386 (PKPCPPPKPC…PSIPLLPNIP (68 aa)). A disordered region spans residues 319 to 388 (PKPCPPPKPC…IPLLPNIPPL (70 aa)).

Belongs to the asfivirus CD2 homolog protein family. As to quaternary structure, both glycosylated and nonglycosylated forms interact (via C-terminus) with the host AP-1 complex. Post-translationally, cleaved into two fragments of 63 kDa and 26 kDa containing respectively the glycosylated N-terminus and the nonglycosylated C-terminus. A full-length 89-kDa glycosylated form also exists.

The protein localises to the host cell membrane. It is found in the virion membrane. It localises to the host Golgi apparatus. May play an immunosuppressive role by inhibiting lymphocyte proliferation and subsequently facilitating viral replication and generalization of infection. Responsible for viral hemadsorption, which may help viral spread. Increases virus replication in the tick vector at the step of virus uptake or replication in the tick gut. May play a role in the host Golgi reorganization to yield viral factories. May play a role in host cell penetration. The polypeptide is CD2 homolog (Ornithodoros (relapsing fever ticks)).